A 312-amino-acid polypeptide reads, in one-letter code: Protoheme IX farnesyltransferase (312 aa).

A run of 8 helical transmembrane segments spans residues 34 to 54 (LVIF…HPVL), 56 to 76 (FTAI…NMAL), 119 to 139 (ALVN…YVVI), 152 to 172 (IVIG…AATG), 179 to 199 (LLLF…LALF), 225 to 245 (ILLY…LGYF), 247 to 267 (WVYG…AINV), and 283 to 303 (LFAF…LDVL).

It belongs to the UbiA prenyltransferase family. Protoheme IX farnesyltransferase subfamily.

The protein localises to the cell inner membrane. It carries out the reaction heme b + (2E,6E)-farnesyl diphosphate + H2O = Fe(II)-heme o + diphosphate. The protein operates within porphyrin-containing compound metabolism; heme O biosynthesis; heme O from protoheme: step 1/1. Functionally, converts heme B (protoheme IX) to heme O by substitution of the vinyl group on carbon 2 of heme B porphyrin ring with a hydroxyethyl farnesyl side group. In Nitrobacter hamburgensis (strain DSM 10229 / NCIMB 13809 / X14), this protein is Protoheme IX farnesyltransferase.